We begin with the raw amino-acid sequence, 320 residues long: Pantothenate kinase (320 aa).

96-103 (GSVAVGKS) contacts ATP.

Belongs to the prokaryotic pantothenate kinase family.

It is found in the cytoplasm. It carries out the reaction (R)-pantothenate + ATP = (R)-4'-phosphopantothenate + ADP + H(+). It functions in the pathway cofactor biosynthesis; coenzyme A biosynthesis; CoA from (R)-pantothenate: step 1/5. The polypeptide is Pantothenate kinase (Brevibacillus brevis (strain 47 / JCM 6285 / NBRC 100599)).